Reading from the N-terminus, the 85-residue chain is Sec-independent protein translocase protein TatA (85 aa).

Residues 1–21 traverse the membrane as a helical segment; that stretch reads MGIFDWKHWLIILIVVVLVFG. The tract at residues 43–85 is disordered; that stretch reads VNTEEGENRPAEPQTGTSAGDTLNKTQTIEGQAQKVDTPVRKD. Polar residues predominate over residues 56 to 73; that stretch reads QTGTSAGDTLNKTQTIEG.

It belongs to the TatA/E family. As to quaternary structure, the Tat system comprises two distinct complexes: a TatABC complex, containing multiple copies of TatA, TatB and TatC subunits, and a separate TatA complex, containing only TatA subunits. Substrates initially bind to the TatABC complex, which probably triggers association of the separate TatA complex to form the active translocon.

It localises to the cell inner membrane. In terms of biological role, part of the twin-arginine translocation (Tat) system that transports large folded proteins containing a characteristic twin-arginine motif in their signal peptide across membranes. TatA could form the protein-conducting channel of the Tat system. This Azotobacter vinelandii (strain DJ / ATCC BAA-1303) protein is Sec-independent protein translocase protein TatA.